The primary structure comprises 92 residues: Regakine-1 (92 aa).

The signal sequence occupies residues 1-21 (MRVSLAALAFLLTLAVLHSEA). Disulfide bonds link C32–C56 and C33–C72.

This sequence belongs to the intercrine beta (chemokine CC) family. As to expression, plasma serum.

The protein resides in the secreted. In terms of biological role, chemotactic activity for neutrophils and lymphocytes. Binds to heparin. The protein is Regakine-1 of Bos taurus (Bovine).